The sequence spans 802 residues: Oligophrenin-1 (802 aa).

The PH domain maps to 265–368 (QPTIEGYLYT…WMEAMDGKEP (104 aa)). One can recognise a Rho-GAP domain in the interval 380-564 (MELNEVGFKF…ILIEHFGKIY (185 aa)). 4 disordered regions span residues 569–588 (EESA…RHKP), 607–666 (LDES…EPCP), 680–770 (GGTK…NAGE), and 783–802 (FETA…GDES). Positions 616-627 (HQTPNGTITSSI) are enriched in polar residues. A compositionally biased stretch (basic and acidic residues) spans 716–732 (HHKEGDADSFSKVRPPG).

In terms of assembly, interacts with HOMER1. Interacts with AMPA receptor complexes. Interacts with SH3GL2 (endophilin-A1). Interacts (via C-terminus) with NR1D1. Expressed in brain.

Its subcellular location is the postsynapse. The protein resides in the presynapse. It is found in the cell projection. The protein localises to the axon. It localises to the dendritic spine. Its subcellular location is the dendrite. The protein resides in the cytoplasm. In terms of biological role, stimulates GTP hydrolysis of members of the Rho family. Its action on RHOA activity and signaling is implicated in growth and stabilization of dendritic spines, and therefore in synaptic function. Critical for the stabilization of AMPA receptors at postsynaptic sites. Critical for the regulation of synaptic vesicle endocytosis at presynaptic terminals. Required for the localization of NR1D1 to dendrites, can suppress its repressor activity and protect it from proteasomal degradation. In Homo sapiens (Human), this protein is Oligophrenin-1 (OPHN1).